A 450-amino-acid chain; its full sequence is Probable glucan endo-1,3-beta-glucosidase eglC (450 aa).

A signal peptide spans 1-18 (MQFTHLVALALALATSEA). Glutamate 128 acts as the Proton donor in catalysis. Asparagine 183 carries N-linked (GlcNAc...) asparagine glycosylation. Glutamate 239 serves as the catalytic Nucleophile. Asparagine 362 and asparagine 368 each carry an N-linked (GlcNAc...) asparagine glycan. Composition is skewed to low complexity over residues 377-395 (SSAI…SGSS) and 405-420 (ASGQ…SAPS). The segment at 377–420 (SSAISGSSSGSAAGSSGSSGSSGSGASGASGQSSSSTGSSSAPS) is disordered. The GPI-anchor amidated asparagine moiety is linked to residue asparagine 427. The propeptide at 428–450 (AASGLSGSICGAVVAVCLALAAL) is removed in mature form.

The protein belongs to the glycosyl hydrolase 17 family. The GPI-anchor is attached to the protein in the endoplasmic reticulum and serves to target the protein to the cell surface. There, the glucosamine-inositol phospholipid moiety is cleaved off and the GPI-modified mannoprotein is covalently attached via its lipidless GPI glycan remnant to the 1,6-beta-glucan of the outer cell wall layer.

It localises to the cell membrane. It is found in the secreted. The protein localises to the cell wall. The catalysed reaction is Hydrolysis of (1-&gt;3)-beta-D-glucosidic linkages in (1-&gt;3)-beta-D-glucans.. Glucanases play a role in cell expansion during growth, in cell-cell fusion during mating, and in spore release during sporulation. This enzyme may be involved in beta-glucan degradation and also function biosynthetically as a transglycosylase. This is Probable glucan endo-1,3-beta-glucosidase eglC (eglC) from Aspergillus fumigatus (strain CBS 144.89 / FGSC A1163 / CEA10) (Neosartorya fumigata).